The sequence spans 441 residues: Integral membrane protein GPR180 (441 aa).

Positions 1-23 (MGGLRLLAVALTCSCWWPQGGQG) are cleaved as a signal peptide. N111 is a glycosylation site (N-linked (GlcNAc...) asparagine). The next 7 membrane-spanning stretches (helical) occupy residues 174 to 194 (FFFL…QSLW), 206 to 226 (ILKV…ANYI), 250 to 270 (IASQ…WTIV), 285 to 305 (TPAS…LLLW), 322 to 342 (LAGL…GCGL), 361 to 381 (FAKG…IAVA), and 390 to 410 (LITV…YRLF).

The protein localises to the membrane. This Mus musculus (Mouse) protein is Integral membrane protein GPR180 (Gpr180).